The sequence spans 329 residues: Malate dehydrogenase (329 aa).

An NAD(+)-binding site is contributed by 12 to 18; that stretch reads GAAGQIG. Substrate-binding residues include arginine 93 and arginine 99. NAD(+) contacts are provided by residues asparagine 106, glutamine 113, and 130–132; that span reads VGN. Residues asparagine 132 and arginine 163 each contribute to the substrate site. Histidine 188 acts as the Proton acceptor in catalysis.

The protein belongs to the LDH/MDH superfamily. MDH type 2 family.

The enzyme catalyses (S)-malate + NAD(+) = oxaloacetate + NADH + H(+). Catalyzes the reversible oxidation of malate to oxaloacetate. The chain is Malate dehydrogenase from Frankia casuarinae (strain DSM 45818 / CECT 9043 / HFP020203 / CcI3).